Reading from the N-terminus, the 376-residue chain is RCC1 domain-containing protein 1 (376 aa).

Residues 1-169 (MAEERPGAWF…ARQLELGAEH (169 aa)) form an interaction with KDM8 region. Residues 6–56 (PGAWFGFGFCGFGQELGSGRGRQVHSPSPLRAGVDICRVSASWSYTAFVTR) form an RCC1 1 repeat. Arginine 141 is subject to (3R)-3-hydroxyarginine. RCC1 repeat units lie at residues 176–227 (AGQV…CVSE), 229–317 (GDIY…VVTR), and 318–371 (TGEL…VYAV).

Found in a complex with KDM8. Interacts (via N-terminus) with KDM8 (via N-terminus). Post-translationally, specifically hydroxylated (with R stereochemistry) at C-3 of ARG-141 by KDM8.

It is found in the chromosome. Functionally, plays a role in transcriptional repression of satellite repeats, possibly by regulating H3K36 methylation levels in centromeric regions together with KDM8. Possibly together with KDM8, is involved in proper mitotic spindle organization and chromosome segregation. Plays a role in regulating alpha-tubulin deacetylation and cytoskeletal microtubule stability, thereby promoting cell migration and TGF-beta-induced epithelial to mesenchymal transition (EMT), potentially through the inhibition of KDM8. The protein is RCC1 domain-containing protein 1 of Homo sapiens (Human).